The chain runs to 144 residues: Thyrostimulin alpha-2 subunit (144 aa).

The N-terminal stretch at 1 to 41 (MGRRDSGRAVAQRYRGVTRGVTVIACLMVVCACVGLCDATG) is a signal peptide. 4 disulfide bridges follow: Cys52–Cys107, Cys66–Cys121, Cys76–Cys136, and Cys80–Cys138.

It belongs to the glycoprotein hormones subunit alpha family. As to quaternary structure, heterodimer with GPHB5; non-covalently-linked. As to expression, expressed by the venom duct.

The protein localises to the secreted. This is Thyrostimulin alpha-2 subunit from Conus victoriae (Queen Victoria cone).